Here is an 88-residue protein sequence, read N- to C-terminus: Large ribosomal subunit protein eL37 (88 aa).

Zn(2+) is bound by residues C17, C20, C32, and C35. Residues 17 to 35 (CNRCGRRSFHVQKKTCSSC) form a C4-type zinc finger.

The protein belongs to the eukaryotic ribosomal protein eL37 family. The cofactor is Zn(2+).

Its function is as follows. Binds to the 23S rRNA. This chain is Large ribosomal subunit protein eL37 (RPL37), found in Candida albicans (Yeast).